The primary structure comprises 120 residues: UPF0231 protein YacL (120 aa).

It belongs to the UPF0231 family.

The chain is UPF0231 protein YacL from Salmonella typhi.